The primary structure comprises 334 residues: D-alanine--D-alanine ligase (334 aa).

The ATP-grasp domain occupies 111–315; it reads KRVCLSHGVP…YEDLCIEILR (205 aa). 141–196 provides a ligand contact to ATP; the sequence is AAEFGLPLMLKAPHEGSTIGIAKVETAEGMQAGFDLCAKYEAVVLVEQFVKGRELT. Asp268, Glu282, and Asn284 together coordinate Mg(2+).

Belongs to the D-alanine--D-alanine ligase family. Requires Mg(2+) as cofactor. Mn(2+) serves as cofactor.

Its subcellular location is the cytoplasm. The enzyme catalyses 2 D-alanine + ATP = D-alanyl-D-alanine + ADP + phosphate + H(+). It participates in cell wall biogenesis; peptidoglycan biosynthesis. In terms of biological role, cell wall formation. The chain is D-alanine--D-alanine ligase from Herminiimonas arsenicoxydans.